Consider the following 269-residue polypeptide: uncharacterized protein (269 aa).

A run of 6 helical transmembrane segments spans residues 21–43 (LNVW…ILFT), 48–70 (LFLI…FSLI), 121–143 (YLIL…VFTF), 147–166 (FIIA…FWII), 205–227 (SLEV…LFQF), and 242–264 (FVAF…YLLW).

It localises to the cell membrane. This is an uncharacterized protein from Aquifex aeolicus (strain VF5).